Here is a 204-residue protein sequence, read N- to C-terminus: Protease (204 aa).

Residues histidine 54, aspartate 71, and cysteine 121 contribute to the active site.

This sequence belongs to the peptidase C5 family. In terms of assembly, interacts with protease cofactor pVI-C; this interaction is necessary for protease activation.

Its subcellular location is the virion. The protein localises to the host nucleus. It carries out the reaction Cleaves proteins of the adenovirus and its host cell at two consensus sites: -Yaa-Xaa-Gly-Gly-|-Xaa- and -Yaa-Xaa-Gly-Xaa-|-Gly- (in which Yaa is Met, Ile or Leu, and Xaa is any amino acid).. Requires DNA and protease cofactor for maximal activation. Inside nascent virions, becomes partially activated by binding to the viral DNA, allowing it to cleave the cofactor that binds to the protease and fully activates it. Actin, like the viral protease cofactor, seems to act as a cofactor in the cleavage of cytokeratin 18 and of actin itself. Cleaves viral precursor proteins (pTP, pIIIa, pVI, pVII, pVIII, and pX) inside newly assembled particles giving rise to mature virions. Protease complexed to its cofactor slides along the viral DNA to specifically locate and cleave the viral precursors. Mature virions have a weakened organization compared to the unmature virions, thereby facilitating subsequent uncoating. Without maturation, the particle lacks infectivity and is unable to uncoat. Late in adenovirus infection, in the cytoplasm, may participate in the cytoskeleton destruction. Cleaves host cell cytoskeletal keratins K7 and K18. This is Protease from Frog adenovirus 1 (strain ATCC VR-896) (FrAdV-1).